The following is a 427-amino-acid chain: Glutamate-1-semialdehyde 2,1-aminomutase (427 aa).

Lysine 265 carries the post-translational modification N6-(pyridoxal phosphate)lysine.

This sequence belongs to the class-III pyridoxal-phosphate-dependent aminotransferase family. HemL subfamily. As to quaternary structure, homodimer. The cofactor is pyridoxal 5'-phosphate.

The protein resides in the cytoplasm. It carries out the reaction (S)-4-amino-5-oxopentanoate = 5-aminolevulinate. It participates in porphyrin-containing compound metabolism; protoporphyrin-IX biosynthesis; 5-aminolevulinate from L-glutamyl-tRNA(Glu): step 2/2. The sequence is that of Glutamate-1-semialdehyde 2,1-aminomutase from Bordetella avium (strain 197N).